A 476-amino-acid chain; its full sequence is MNFETVIGLEVHVELKTKSKIFSSSPTPFGAEANTQTSVIDLGYPGVLPVLNKEAVEFAMKAAMALNCEIATDTKFDRKNYFYPDNPKAYQISQFDKPIGENGWIEIEVGGKTKKIGITRLHLEEDAGKLTHTGDGYSLVDFNRQGTPLVEIVSEPDIRTPEEAYAYLEKLKSIIQYTGVSDCKMEEGSLRCDANISLRPIGQEKFGTKTELKNLNSFAFVQKGLEHEEKRQEQVLLSGGVIQQETRRYDEATKKTILMRVKEGSDDYRYFPEPDLVELYIDDEWKERVRATIPELPDERRKRYIEELGLPAYDAMVLTLTKEMADFFEETVNKGAEAKQASNWLMGEVSAYLNAEQKELEDVALTPEGLAGMIKLIEKGTISSKIAKKVFKELIEKGGDAEKIVKEKGLVQISDESVLLKLVTDALDSNPQSIEDFKNGKDRAIGFLVGQIMKASKGQANPPMVNKILLEEIKKR.

Belongs to the GatB/GatE family. GatB subfamily. As to quaternary structure, heterotrimer of A, B and C subunits.

The enzyme catalyses L-glutamyl-tRNA(Gln) + L-glutamine + ATP + H2O = L-glutaminyl-tRNA(Gln) + L-glutamate + ADP + phosphate + H(+). It carries out the reaction L-aspartyl-tRNA(Asn) + L-glutamine + ATP + H2O = L-asparaginyl-tRNA(Asn) + L-glutamate + ADP + phosphate + 2 H(+). Its function is as follows. Allows the formation of correctly charged Asn-tRNA(Asn) or Gln-tRNA(Gln) through the transamidation of misacylated Asp-tRNA(Asn) or Glu-tRNA(Gln) in organisms which lack either or both of asparaginyl-tRNA or glutaminyl-tRNA synthetases. The reaction takes place in the presence of glutamine and ATP through an activated phospho-Asp-tRNA(Asn) or phospho-Glu-tRNA(Gln). This chain is Aspartyl/glutamyl-tRNA(Asn/Gln) amidotransferase subunit B, found in Bacillus velezensis (strain DSM 23117 / BGSC 10A6 / LMG 26770 / FZB42) (Bacillus amyloliquefaciens subsp. plantarum).